A 634-amino-acid polypeptide reads, in one-letter code: Sodium-dependent multivitamin transporter (634 aa).

12 consecutive transmembrane segments (helical) span residues 23-43 (FSVV…VIGL), 65-85 (MGCL…VAIL), 100-120 (FLGC…IPVF), 142-162 (ICGT…ALYA), 175-195 (LWLS…LGGL), 207-227 (LIMF…VGGL), 255-275 (FWTL…VNQA), 295-315 (AVFP…LVMF), 350-370 (LPGL…SSAF), 403-423 (FAYG…GSVL), 427-447 (LSIF…GMFF), and 455-475 (AIVG…GSIV). Residues Asn-488 and Asn-497 are each glycosylated (N-linked (GlcNAc...) asparagine). The helical transmembrane segment at 526–546 (LWYSAHNSTTVIAVGLIVSLL) threads the bilayer.

This sequence belongs to the sodium:solute symporter (SSF) (TC 2.A.21) family. Interacts with PDZD11. In terms of tissue distribution, expressed in the jejunum (at protein level). Expressed in lung, skeletal muscle, heart, brain, kidney, intestine, liver, and placenta.

Its subcellular location is the cell membrane. It localises to the apical cell membrane. It carries out the reaction biotin(out) + 2 Na(+)(out) = biotin(in) + 2 Na(+)(in). The catalysed reaction is (R)-pantothenate(out) + 2 Na(+)(out) = (R)-pantothenate(in) + 2 Na(+)(in). It catalyses the reaction (R)-lipoate(out) + 2 Na(+)(out) = (R)-lipoate(in) + 2 Na(+)(in). The enzyme catalyses iodide(out) + 2 Na(+)(out) = iodide(in) + 2 Na(+)(in). Sodium-dependent multivitamin transporter that mediates the electrogenic transport of pantothenate, biotin, lipoate and iodide. Functions as a Na(+)-coupled substrate symporter where the stoichiometry of Na(+):substrate is 2:1, creating an electrochemical Na(+) gradient used as driving force for substrate uptake. Required for biotin and pantothenate uptake in the intestine across the brush border membrane. Plays a role in the maintenance of intestinal mucosa integrity, by providing the gut mucosa with biotin. Contributes to the luminal uptake of biotin and pantothenate into the brain across the blood-brain barrier. The sequence is that of Sodium-dependent multivitamin transporter from Rattus norvegicus (Rat).